The primary structure comprises 250 residues: uncharacterized protein (250 aa).

Residue lysine 17 forms a Glycyl lysine isopeptide (Lys-Gly) (interchain with G-Cter in ubiquitin) linkage. Residues 30–67 (REEDYVATSKDNIHHHPCDWSAKPSQRQNENEQKSTIR) form a disordered region.

This is an uncharacterized protein from Saccharomyces cerevisiae (strain ATCC 204508 / S288c) (Baker's yeast).